The chain runs to 429 residues: Phenylalanine--tRNA ligase, chloroplastic/mitochondrial (429 aa).

The transit peptide at 1 to 53 directs the protein to the chloroplast and mitochondrion; that stretch reads MTVFSVQSTIFSRASVALLSSNGFKRFSFVSSFSSSAAYSPPKMRKRRYPIVS. The residue at position 54 (A54) is an N-acetylalanine. Substrate is bound by residues 163–166, R185, 192–194, 199–201, E269, and F294; these read SAHQ, THY, and QME. The region spanning 338–429 is the FDX-ACB domain; it reads SKYPPCYKDI…VQKKLNVELR (92 aa).

The protein belongs to the class-II aminoacyl-tRNA synthetase family. Monomer.

The protein resides in the plastid. The protein localises to the chloroplast stroma. It is found in the mitochondrion matrix. It carries out the reaction tRNA(Phe) + L-phenylalanine + ATP = L-phenylalanyl-tRNA(Phe) + AMP + diphosphate + H(+). Its function is as follows. Is responsible for the charging of tRNA(Phe) with phenylalanine in mitochondrial translation. In Arabidopsis thaliana (Mouse-ear cress), this protein is Phenylalanine--tRNA ligase, chloroplastic/mitochondrial.